The chain runs to 637 residues: Proton myo-inositol cotransporter (637 aa).

The Cytoplasmic portion of the chain corresponds to 1 to 65 (MSRKASEDVE…AARRQFQRDE (65 aa)). Phosphoserine is present on Ser-6. A disordered region spans residues 16–38 (LSSLMGERRRRQPEPGAPGGERS). Phosphoserine occurs at positions 44 and 47. A helical membrane pass occupies residues 66 to 86 (TPAFVYAAAAFSALGGFLFGY). At 87 to 114 (DTGVVSGAMLLLRRQMRLGAMWQELLVS) the chain is on the extracellular side. Residues 115-135 (GAVGAAAVAALAGGALNGALG) form a helical membrane-spanning segment. Over 136 to 137 (RR) the chain is Cytoplasmic. Residues 138 to 158 (SAILLASALCTVGSAVLAAAA) traverse the membrane as a helical segment. Over 159–167 (NKETLLAGR) the chain is Extracellular. A helical membrane pass occupies residues 168–188 (LVVGLGIGIASMTVPVYIAEV). At 189-201 (SPPNLRGRLVTIN) the chain is on the cytoplasmic side. The chain crosses the membrane as a helical span at residues 202 to 222 (TLFITGGQFFASVVDGAFSYL). The Extracellular segment spans residues 223 to 228 (QKDGWR). The chain crosses the membrane as a helical span at residues 229–249 (YMLGLAAIPAVIQFLGFLFLP). Topologically, residues 250–313 (ESPRWLIQKG…RMLSYPPTRR (64 aa)) are cytoplasmic. Residues 314-334 (ALAVGCGLQMFQQLSGINTIM) traverse the membrane as a helical segment. Residues 335-352 (YYSATILQMSGVEDDRLA) lie on the Extracellular side of the membrane. The helical transmembrane segment at 353 to 373 (IWLASITAFTNFIFTLVGVWL) threads the bilayer. Residues 374–382 (VEKVGRRKL) lie on the Cytoplasmic side of the membrane. A helical transmembrane segment spans residues 383 to 403 (TFGSLAGTTVALTILALGFLL). At 404–497 (SAQVSPRVTF…SFCPTPYSWT (94 aa)) the chain is on the extracellular side. N-linked (GlcNAc...) asparagine glycosylation is found at Asn-422, Asn-447, and Asn-474. Residues 498 to 518 (ALVGLVLYLVFFAPGMGPMPW) form a helical membrane-spanning segment. Residues 519-538 (TVNSEIYPLWARSTGNACSA) lie on the Cytoplasmic side of the membrane. The helical transmembrane segment at 539–559 (GINWIFNVLVSLTFLHTAEYL) threads the bilayer. Residues 560-562 (TYY) lie on the Extracellular side of the membrane. The helical transmembrane segment at 563–583 (GAFFLYAGFAAVGLLFVYGCL) threads the bilayer. Topologically, residues 584–637 (PETKGKKLEEIESLFDHRLCTCGTADSDEGRYIEYIRVKGSNYHLSDNDASDVE) are cytoplasmic. Ser-629 and Ser-634 each carry phosphoserine.

It belongs to the major facilitator superfamily. Sugar transporter (TC 2.A.1.1) family.

It localises to the cell membrane. The catalysed reaction is myo-inositol(out) + H(+)(out) = myo-inositol(in) + H(+)(in). H(+)-myo-inositol cotransporter. Can also transport related stereoisomers. The protein is Proton myo-inositol cotransporter of Rattus norvegicus (Rat).